Consider the following 440-residue polypeptide: Chromosome partition protein MukF (440 aa).

A leucine-zipper region spans residues 208-236; that stretch reads LSETSGTLRELQDTLEAAGDKLQANLLRI.

It belongs to the MukF family. In terms of assembly, interacts, and probably forms a ternary complex, with MukE and MukB via its C-terminal region. The complex formation is stimulated by calcium or magnesium. It is required for an interaction between MukE and MukB.

The protein resides in the cytoplasm. It localises to the nucleoid. Involved in chromosome condensation, segregation and cell cycle progression. May participate in facilitating chromosome segregation by condensation DNA from both sides of a centrally located replisome during cell division. Not required for mini-F plasmid partitioning. Probably acts via its interaction with MukB and MukE. Overexpression results in anucleate cells. It has a calcium binding activity. The chain is Chromosome partition protein MukF from Serratia proteamaculans (strain 568).